The chain runs to 89 residues: N.vectensis toxin 7 (89 aa).

A signal peptide spans 1–21 (MASFFKIAVICLVMLVVCSNA). Cystine bridges form between cysteine 44/cysteine 77, cysteine 46/cysteine 69, and cysteine 62/cysteine 78.

As to expression, expressed in ectodermal gland cells.

In terms of biological role, probable toxin. The polypeptide is N.vectensis toxin 7 (Nematostella vectensis (Starlet sea anemone)).